Reading from the N-terminus, the 1832-residue chain is Putative transcription factor capicua (1832 aa).

A phosphoserine mark is found at S41 and S49. Disordered regions lie at residues 66–121 (ANQS…EVGS), 135–227 (STVG…AHPH), 323–353 (QQQQQHQQLQQQQQLQQQQQSPPQMPLNHNN), 389–427 (NQRQKQQQEEPDDQLDDDVFETTTPGISANSKKQTAAMR), 444–493 (DGAA…IRRP), 563–619 (DRRK…GGQG), 690–739 (RERV…SGGE), 784–845 (QPTG…VSAP), 874–938 (PMHH…EDDE), 1069–1105 (TSTLSSSSSNPANNEAPNKFSNFPTQHQPTTTTTISC), 1151–1178 (GQDEEEEEDEGNAEKQENPKVAGKEQVT), 1457–1602 (DGGM…STAA), 1632–1668 (QPEDCQSPSAIAVPSSPRVYGTNYRKKNTAPPPVQKL), 1701–1733 (LESSDQTGRSPRTPKTPLQSARSDASEKGHRKV), and 1789–1817 (ASCTPHSAGPNTPSDSNSSSTTLSASSTS). The segment covering 96–121 (NANNNSSNNNTSSSNNNNNSNWEVGS) has biased composition (low complexity). Positions 172–186 (PPPPPPASLPAPSAP) are enriched in pro residues. Composition is skewed to low complexity over residues 187–203 (PTSGSSSSHNSVGHATS), 211–223 (QQQHQQQQQHQQQ), and 323–342 (QQQQQHQQLQQQQQLQQQQQ). Over residues 397-408 (EEPDDQLDDDVF) the composition is skewed to acidic residues. Polar residues predominate over residues 409 to 422 (ETTTPGISANSKKQ). Residues 446-484 (AAGAPATSAAKRRSQSLSALQQQQQQQQQAGAAGTAAGQ) are compositionally biased toward low complexity. The HMG box DNA-binding region spans 490-558 (IRRPMNAFMI…AHFKLHPEWK (69 aa)). Residues 610-619 (GGSGSCGGQG) are compositionally biased toward gly residues. An interaction with gro region spans residues 834–1832 (GSASGGGVVS…TSAADVFQYY (999 aa)). The span at 903-914 (ESSEKDKPALDD) shows a compositional bias: basic and acidic residues. The span at 915–938 (QERDEVEEEDEDEEDDDEDDEDDE) shows a compositional bias: acidic residues. A compositionally biased stretch (polar residues) spans 1078–1091 (NPANNEAPNKFSNF). Low complexity predominate over residues 1092–1105 (PTQHQPTTTTTISC). Positions 1462–1471 (GCASAAASGG) are enriched in low complexity. A compositionally biased stretch (polar residues) spans 1503–1525 (LSQSKSESNVSFGANLGASNGQH). Residues 1547–1589 (NSSNLSSALPTPTSSTTTPNSDEQLPLTPTTSSSNSNLNQQQP) are compositionally biased toward low complexity. T1716 bears the Phosphothreonine mark. The span at 1724-1733 (DASEKGHRKV) shows a compositional bias: basic and acidic residues. The segment covering 1789 to 1799 (ASCTPHSAGPN) has biased composition (polar residues). The segment covering 1800–1817 (TPSDSNSSSTTLSASSTS) has biased composition (low complexity).

In terms of assembly, interacts with gro. As to expression, expressed in the central region of embryos. Also expressed in ovarian follicle cells, the wing imaginal disks and the wing pouch.

It localises to the nucleus. Functionally, transcriptional repressor required for the specification of numerous cell types during embryonic development. Required for terminal patterning of early embryos. May associate with gro to repress tll and hkb, restricting their expression to embryonic terminal poles where they initiate correct development of head and tail structures. Required for dorsoventral patterning of oocytes and early embryos. Cooperates with dl to repress zen and other dorsal specific genes within the embryo and promotes expression of the ventralizing factor pip in ovarian follicle cells. Required during wing development for the specification of intervein areas, where it mediates localized repression of vein specific genes such as aos, dpp and vvl. The chain is Putative transcription factor capicua (cic) from Drosophila melanogaster (Fruit fly).